A 258-amino-acid polypeptide reads, in one-letter code: Dihydroorotate dehydrogenase B (NAD(+)), electron transfer subunit (258 aa).

The FAD-binding FR-type domain maps to 1-101 (MKKAYLTVVS…LGPLGNGYDP (101 aa)). FAD-binding positions include 52-55 (RPIS), 69-71 (IYR), and 76-77 (GT). Cysteine 220, cysteine 225, cysteine 228, and cysteine 243 together coordinate [2Fe-2S] cluster.

Belongs to the PyrK family. Heterotetramer of 2 PyrK and 2 PyrD type B subunits. The cofactor is [2Fe-2S] cluster. Requires FAD as cofactor.

It participates in pyrimidine metabolism; UMP biosynthesis via de novo pathway; orotate from (S)-dihydroorotate (NAD(+) route): step 1/1. Functionally, responsible for channeling the electrons from the oxidation of dihydroorotate from the FMN redox center in the PyrD type B subunit to the ultimate electron acceptor NAD(+). In Bacillus pumilus (strain SAFR-032), this protein is Dihydroorotate dehydrogenase B (NAD(+)), electron transfer subunit.